The sequence spans 108 residues: ATP-dependent Clp protease adapter protein ClpS (108 aa).

Residues 1-10 (MADSDKHGDE) show a composition bias toward basic and acidic residues. Residues 1 to 21 (MADSDKHGDEGPSTGVVVKAK) form a disordered region.

The protein belongs to the ClpS family. In terms of assembly, binds to the N-terminal domain of the chaperone ClpA.

Involved in the modulation of the specificity of the ClpAP-mediated ATP-dependent protein degradation. The sequence is that of ATP-dependent Clp protease adapter protein ClpS from Rhodospirillum centenum (strain ATCC 51521 / SW).